The following is a 500-amino-acid chain: Pyoverdin chromophore biosynthetic protein PvcC (500 aa).

FAD is required as a cofactor.

It participates in siderophore biosynthesis; pyoverdin biosynthesis. The sequence is that of Pyoverdin chromophore biosynthetic protein PvcC (pvcC) from Pseudomonas aeruginosa (strain ATCC 15692 / DSM 22644 / CIP 104116 / JCM 14847 / LMG 12228 / 1C / PRS 101 / PAO1).